Consider the following 139-residue polypeptide: MFVKAILLLSIAVAYASADCLHCICMRESGCKPIGCHMDVGSLSCGYYQIKIPYYEDCGQPGKKHGESTEVAWKRCADDLKCATNCVENYYNRYKHECAGTGQGACEVMARNHNGGPRGCHASGTLGYWKGVHSCCGCS.

The signal sequence occupies residues 1-18; it reads MFVKAILLLSIAVAYASA. One can recognise an I-type lysozyme domain in the interval 19–138; the sequence is DCLHCICMRE…WKGVHSCCGC (120 aa). Cystine bridges form between cysteine 20/cysteine 106, cysteine 23/cysteine 138, cysteine 25/cysteine 31, cysteine 36/cysteine 45, cysteine 58/cysteine 86, cysteine 76/cysteine 82, and cysteine 98/cysteine 120. The active-site Proton donor is glutamate 28. Aspartate 39 (nucleophile) is an active-site residue. Position 51–57 (51–57) interacts with substrate; it reads KIPYYED. Residues tyrosine 90 and 113-115 each bind substrate; that span reads HNG.

This sequence belongs to the glycosyl hydrolase 22 family. Type-I lysozyme subfamily. As to expression, expressed in pharyngeal muscle cell pm3, nerve ring and intestine.

The catalysed reaction is Hydrolysis of (1-&gt;4)-beta-linkages between N-acetylmuramic acid and N-acetyl-D-glucosamine residues in a peptidoglycan and between N-acetyl-D-glucosamine residues in chitodextrins.. Its function is as follows. Has bacteriolytic activity against Gram-positive bacteria. May play a role in resistance to Gram-positive bacterium S.aureus infection. The chain is Invertebrate-type lysozyme 2 from Caenorhabditis elegans.